Here is a 626-residue protein sequence, read N- to C-terminus: PEX5-related protein (626 aa).

Disordered stretches follow at residues 1-20 (MYQGHMQKSKEQGYGKLSSD), 118-167 (VSQT…SSLD), and 181-235 (KFHG…ASEL). The segment covering 181–198 (KFHGDRNTKGHPMAERKS) has biased composition (basic and acidic residues). Ser205 carries the post-translational modification Phosphoserine. Positions 225-235 (SALNSESASEL) are enriched in low complexity. Residues Ser253, Ser257, and Ser261 each carry the phosphoserine modification. 3 TPR repeats span residues 326–359 (WPGAFEEGLKRLKEGDLPVTILFMEAAILQDPGD), 360–393 (AEAWQFLGITQAENENEQAAIVALQRCLELQPNN), and 395–427 (KALMALAVSYTNTGHQQDACDALKNWIKQNPKY). A phosphoserine mark is found at Ser445 and Ser447. 3 TPR repeats span residues 474–507 (PDLQTGLGVLFHLSGEFNRAIDAFNAALTVRPED), 509–541 (SLWNRLGATLANGDRSEEAVEAYTRALEIQPGF), and 543–575 (RSRYNLGISCINLGAYREAVSNFLTALSLQRKS).

This sequence belongs to the peroxisomal targeting signal receptor family. Interacts with RAB8B. Forms an obligate 4:4 complex with HCN2. May interact with the C-terminal PTS1-type tripeptide peroxisomal targeting signal (SKL-type); the relevance of such interaction is however unclear. Interacts with HCN3. Interacts with HCN4 with a 4:4 HCN4:PEX5L stoichiometry; reduces the effects of cAMP on the voltage-dependence and rate of activation of HCN4. Mainly expressed in brain. Also expressed in pancreas, testis and pituitary.

The protein resides in the cytoplasm. Its subcellular location is the membrane. Accessory subunit of hyperpolarization-activated cyclic nucleotide-gated (HCN) channels, regulating their cell-surface expression and cyclic nucleotide dependence. The chain is PEX5-related protein (PEX5L) from Homo sapiens (Human).